The primary structure comprises 813 residues: Receptor-like protein 48 (813 aa).

The N-terminal stretch at 1-30 (MHSCSERRMMTVIWSLCLIFCLSNSILAIA) is a signal peptide. Residues 31–786 (KDLCLPDQRD…EDEEKEEKNQ (756 aa)) lie on the Extracellular side of the membrane. 3 N-linked (GlcNAc...) asparagine glycosylation sites follow: N69, N105, and N123. LRR repeat units follow at residues 111–134 (LQHLQSLELSSNNISGILPDSIGN), 136–159 (KYLRSLSFRTCHLFGKIPSSLGSL), and 160–182 (SYLTHLDLSYNDFTSEGPDSGGN). N195 and N216 each carry an N-linked (GlcNAc...) asparagine glycan. LRR repeat units follow at residues 196 to 219 (LSSVTWIDLGSNQLKGMLPSNMSS), 220 to 244 (LSKLVSFDISENSFSGSIPSSLFMI), 245 to 260 (PSLNFSGPLEIGNISS), 261 to 285 (HSELGYLYMGENNFNGPIPGSLSKL), 288 to 310 (LRDLSLSFWNTGRGIVDFSIFLH), 311 to 335 (LKSLCSLDLSYLNTRSMVDLSFFSH), 336 to 359 (LMSLDELDLSGINLKISSTLSFPS), 361 to 381 (TGTLILASCNIVEFPKFLENQ), 382 to 405 (TSLFYLDISANHIEGQVPEWLWRL), 406 to 432 (PTLSFVNIAQNSFSGELPMLPNSIYSF), 434 to 450 (ASDNQFSGEIPRTVCEL), 451 to 473 (VSLNTLVLSNNKFSGSIPRCFEN), 475 to 498 (KTISILHLRNNSLSGVFPKEIISE), 500 to 521 (LTSLDVGHNWLSGQLPKSLIKC), 523 to 544 (DLEFLNVEDNRINDKFPFWLRS), 545 to 571 (LSNLQILVLRSNEFYGPIFSLEDSLSF), 572 to 595 (PKLRIFDISENHFTGVLPSDYFAG), 642 to 666 (FTIYKTIDVSGNRLEGDIPESIGIL), 667 to 690 (KELIVLNMSNNAFTGHIPPSLSNL), 691 to 714 (SNLQSLDLSQNRLSGSIPPELGKL), and 716 to 739 (FLEWMNFSYNRLEGPIPQATQIQS). N-linked (GlcNAc...) asparagine glycans are attached at residues N248 and N257. A glycan (N-linked (GlcNAc...) asparagine) is linked at N380. N-linked (GlcNAc...) asparagine glycosylation occurs at N484. N673 and N689 each carry an N-linked (GlcNAc...) asparagine glycan. Residues N721 and N741 are each glycosylated (N-linked (GlcNAc...) asparagine). Residues 756-785 (FLNKCGGEEEEEEEATKQEEDEDEEKEEKN) form a disordered region. Positions 763–781 (EEEEEEEATKQEEDEDEEK) are enriched in acidic residues. Residues 787–807 (VFSWIAAAIGYVPGVFCGLTI) form a helical membrane-spanning segment. At 808–813 (AHILTS) the chain is on the cytoplasmic side.

It belongs to the RLP family.

It localises to the cell membrane. Functionally, plays a role in root hair development. The chain is Receptor-like protein 48 from Arabidopsis thaliana (Mouse-ear cress).